The primary structure comprises 175 residues: Translation initiation factor IF-3 (175 aa).

Belongs to the IF-3 family. Monomer.

It is found in the cytoplasm. In terms of biological role, IF-3 binds to the 30S ribosomal subunit and shifts the equilibrium between 70S ribosomes and their 50S and 30S subunits in favor of the free subunits, thus enhancing the availability of 30S subunits on which protein synthesis initiation begins. The sequence is that of Translation initiation factor IF-3 from Staphylococcus aureus (strain USA300).